Consider the following 80-residue polypeptide: MARKKASIDFEQSLADLQALVERLENGELSLEESLAAFEQGIALTRDCQGALAQAEQKVQILLERDGELAAQPFDAEPEA.

This sequence belongs to the XseB family. As to quaternary structure, heterooligomer composed of large and small subunits.

The protein localises to the cytoplasm. The catalysed reaction is Exonucleolytic cleavage in either 5'- to 3'- or 3'- to 5'-direction to yield nucleoside 5'-phosphates.. In terms of biological role, bidirectionally degrades single-stranded DNA into large acid-insoluble oligonucleotides, which are then degraded further into small acid-soluble oligonucleotides. The polypeptide is Exodeoxyribonuclease 7 small subunit (Pseudomonas entomophila (strain L48)).